The sequence spans 184 residues: ATP-dependent protease subunit HslV (184 aa).

Thr12 is a catalytic residue. Residues Ala166, Cys169, and Thr172 each coordinate Na(+).

This sequence belongs to the peptidase T1B family. HslV subfamily. As to quaternary structure, a double ring-shaped homohexamer of HslV is capped on each side by a ring-shaped HslU homohexamer. The assembly of the HslU/HslV complex is dependent on binding of ATP.

Its subcellular location is the cytoplasm. The catalysed reaction is ATP-dependent cleavage of peptide bonds with broad specificity.. Its activity is regulated as follows. Allosterically activated by HslU binding. Its function is as follows. Protease subunit of a proteasome-like degradation complex believed to be a general protein degrading machinery. The sequence is that of ATP-dependent protease subunit HslV from Nitrobacter winogradskyi (strain ATCC 25391 / DSM 10237 / CIP 104748 / NCIMB 11846 / Nb-255).